The following is a 511-amino-acid chain: MIQIKRALISVSDKSGLVEFAKFLNQNGVEIISTGGTLKLLKDNGIAAIAIDDYTGFPEILDGRVKTLHPKVHGGLLGVISNPAHKQKMEELKIPKIDLVVVNLYPFLKTVSKPEVQLEEAIENIDIGGPSMIRSAAKNYKHTLVLTDPNDYKKIQNLISSSGISEEISASYMRKAFSHTAMYDAAISSWFYKQSGEVFPDVLNLSFIKKQKLRYGENPHQAASFYEPLFTKSDFSPLQGKELSFNNMLDFDAAFHISSLLPENTVCIIKHLNPCGIAYADNPLEAFQLARRTDPISAFGGVIGIKGQVNGELATSITENFVEGVIAQKFTQEALEVFSKKPNIRLIEIQDFKEALDELDLRPIHHGLLIQDRDYTTITEKDLKVVTKKQPSPDDIRGLMFAWSCVRFIKSNAIVYTEENATLGIGAGQMSRVDSVQLGANKALNVGLSVVGSYVASDAFFPFRDGIDALAKAGAKAIIQPGGSVRDEEVIQAADEHGLIMVFTGMRHFRH.

An MGS-like domain is found at 1–147 (MIQIKRALIS…KNYKHTLVLT (147 aa)).

Belongs to the PurH family.

It carries out the reaction (6R)-10-formyltetrahydrofolate + 5-amino-1-(5-phospho-beta-D-ribosyl)imidazole-4-carboxamide = 5-formamido-1-(5-phospho-D-ribosyl)imidazole-4-carboxamide + (6S)-5,6,7,8-tetrahydrofolate. It catalyses the reaction IMP + H2O = 5-formamido-1-(5-phospho-D-ribosyl)imidazole-4-carboxamide. Its pathway is purine metabolism; IMP biosynthesis via de novo pathway; 5-formamido-1-(5-phospho-D-ribosyl)imidazole-4-carboxamide from 5-amino-1-(5-phospho-D-ribosyl)imidazole-4-carboxamide (10-formyl THF route): step 1/1. It participates in purine metabolism; IMP biosynthesis via de novo pathway; IMP from 5-formamido-1-(5-phospho-D-ribosyl)imidazole-4-carboxamide: step 1/1. The protein is Bifunctional purine biosynthesis protein PurH of Leptospira interrogans serogroup Icterohaemorrhagiae serovar Lai (strain 56601).